Consider the following 188-residue polypeptide: Elongation factor P (188 aa).

It belongs to the elongation factor P family.

The protein localises to the cytoplasm. It participates in protein biosynthesis; polypeptide chain elongation. Involved in peptide bond synthesis. Stimulates efficient translation and peptide-bond synthesis on native or reconstituted 70S ribosomes in vitro. Probably functions indirectly by altering the affinity of the ribosome for aminoacyl-tRNA, thus increasing their reactivity as acceptors for peptidyl transferase. This Anaplasma marginale (strain Florida) protein is Elongation factor P.